The chain runs to 658 residues: L-type lectin-domain containing receptor kinase V.4 (658 aa).

Positions 1–25 are cleaved as a signal peptide; that stretch reads MSRTIGSRVIFLILALFCCTENSRG. A legume-lectin like region spans residues 26–248; that stretch reads KLVMQGSAGF…RAMHYMLSWF (223 aa). Residues 26-280 are Extracellular-facing; sequence KLVMQGSAGF…EKSLVYRIVL (255 aa). N-linked (GlcNAc...) asparagine glycans are attached at residues N66 and N196. Residues 281-301 form a helical membrane-spanning segment; sequence VTSLALVLFVALVASALSIFF. Residues 302-658 lie on the Cytoplasmic side of the membrane; it reads YRRHKKVKEV…LTEPFTSRGR (357 aa). One can recognise a Protein kinase domain in the interval 334–592; that stretch reads KGFKQLLGKG…LGVLCSHQAV (259 aa). ATP-binding positions include 340–348 and K363; that span reads LGKGGFGQV. D460 functions as the Proton acceptor in the catalytic mechanism.

In the C-terminal section; belongs to the protein kinase superfamily. Ser/Thr protein kinase family. It in the N-terminal section; belongs to the leguminous lectin family.

It is found in the cell membrane. It carries out the reaction L-seryl-[protein] + ATP = O-phospho-L-seryl-[protein] + ADP + H(+). It catalyses the reaction L-threonyl-[protein] + ATP = O-phospho-L-threonyl-[protein] + ADP + H(+). Involved in resistance response to the pathogenic oomycetes Phytophthora infestans and Phytophthora capsici and to the pathogenic bacteria Pseudomonas syringae. The protein is L-type lectin-domain containing receptor kinase V.4 of Arabidopsis thaliana (Mouse-ear cress).